Consider the following 96-residue polypeptide: Non-specific lipid-transfer protein 2G (96 aa).

A signal peptide spans 1–29 (MAGMMKKQVVTALMLALVVLAAAPGGARA). 4 cysteine pairs are disulfide-bonded: cysteine 31–cysteine 63, cysteine 39–cysteine 53, cysteine 54–cysteine 89, and cysteine 65–cysteine 96.

The protein localises to the secreted. It localises to the cell wall. Transfer lipids across membranes. May play a role in plant defense or in the biosynthesis of cuticle layers. The sequence is that of Non-specific lipid-transfer protein 2G from Triticum aestivum (Wheat).